A 743-amino-acid chain; its full sequence is UvrABC system protein C (743 aa).

The GIY-YIG domain maps to 16–95 (VDPGVYKFRD…IKEFDPRFNV (80 aa)). One can recognise a UVR domain in the interval 208–243 (DKLVRQLEARMQQASEELDFETAARLRDDVGALRRA). Disordered regions lie at residues 497-543 (AEAA…QTGR) and 694-743 (PSAD…TGVE). The segment covering 506–520 (QASDTDGDQVSDTDG) has biased composition (acidic residues). The span at 734-743 (QSASQRTGVE) shows a compositional bias: polar residues.

Belongs to the UvrC family. As to quaternary structure, interacts with UvrB in an incision complex.

It is found in the cytoplasm. Its function is as follows. The UvrABC repair system catalyzes the recognition and processing of DNA lesions. UvrC both incises the 5' and 3' sides of the lesion. The N-terminal half is responsible for the 3' incision and the C-terminal half is responsible for the 5' incision. This Rhodococcus opacus (strain B4) protein is UvrABC system protein C.